The chain runs to 934 residues: Progesterone receptor (934 aa).

The tract at residues 1 to 49 (MTELKSKGPRAPHVAGGPPSPEVGSPLLCRPAAGPFQGSQTSDTLPEVS) is disordered. An AF3; mediates transcriptional activation region spans residues 1–164 (MTELKSKGPR…PATQRVLSPL (164 aa)). Residues 1-567 (MTELKSKGPR…YSFESLPQKI (567 aa)) are modulating, Pro-Rich. The residue at position 20 (serine 20) is a Phosphoserine. The LXXL motif 1 motif lies at 55–59 (LDGLL). The segment at 61 to 239 (PRLCQGQDPP…EDSAGPLLKG (179 aa)) is disordered. The residue at position 81 (serine 81) is a Phosphoserine. The LXXL motif 2 signature appears at 115–119 (LDTLL). Serine 130 and serine 162 each carry phosphoserine. The interval 165–305 (MSRSGGKTED…LATTMMDFIH (141 aa)) is mediates transcriptional transrepression. Residues 183-187 (KVLPR) carry the Nuclear localization signal motif. Serine 190 carries the post-translational modification Phosphoserine. Polar residues predominate over residues 191–203 (PSRQLLLPTSGSP). Position 213 is a phosphoserine (serine 213). Positions 220-231 (EVEEEDGSESED) are enriched in acidic residues. Phosphoserine; by MAPK1 is present on serine 294. Positions 331–375 (GGAGAASAFAPPQSSPSASSTPVAVGDFPDCAYPPDAEPKDNAYP) are disordered. Positions 335 to 350 (AASAFAPPQSSPSASS) are enriched in low complexity. A Phosphoserine; by MAPK modification is found at serine 345. Lysine 388 participates in a covalent cross-link: Glycyl lysine isopeptide (Lys-Gly) (interchain with G-Cter in SUMO); alternate. Residue lysine 388 forms a Glycyl lysine isopeptide (Lys-Gly) (interchain with G-Cter in ubiquitin); alternate linkage. At serine 400 the chain carries Phosphoserine; by CDK2. The segment at 415-454 (PDFPLGPPPQLPPRAPPSRPGEAAVTAAPASASVSSASSP) is disordered. A compositionally biased stretch (pro residues) spans 418–433 (PLGPPPQLPPRAPPSR). Over residues 434–454 (PGEAAVTAAPASASVSSASSP) the composition is skewed to low complexity. Residues 456 to 547 (STLECILYKA…VYPPYLNYLR (92 aa)) form an AF1; mediates transcriptional activation region. Residue lysine 532 forms a Glycyl lysine isopeptide (Lys-Gly) (interchain with G-Cter in SUMO) linkage. 2 consecutive NR C4-type zinc fingers follow at residues 568 to 588 (CLIC…CGSC) and 604 to 628 (CAGR…LRKC). The nuclear receptor DNA-binding region spans 568–640 (CLICGDEASG…AGMVLGGRKF (73 aa)). A Phosphoserine modification is found at serine 677. An NR LBD domain is found at 680–914 (QDIQLIPPLI…EFPEMMSEVI (235 aa)). Residues 688–934 (LIKLLMSIEP…MVKPLLFHKK (247 aa)) form an AF2; mediates transcriptional activation region. Arginine 767 contacts progesterone.

This sequence belongs to the nuclear hormone receptor family. In terms of assembly, interacts with SMARD1 and UNC45A. Interacts with CUEDC2; the interaction promotes ubiquitination, decreases sumoylation, and represses transcriptional activity. Interacts with PIAS3; the interaction promotes sumoylation of PR in a hormone-dependent manner, inhibits DNA-binding, and alters nuclear export. Interacts with SP1; the interaction requires ligand-induced phosphorylation on Ser-345 by ERK1/2-MAPK. Interacts with PRMT2. Interacts with NCOA2 and NCOA1. Interacts with KLF9. Interacts with GTF2B. Phosphorylated on multiple serine sites. Several of these sites are hormone-dependent. Phosphorylation on Ser-294 is highly hormone-dependent and modulates ubiquitination and sumoylation on Lys-388. Phosphorylation on Ser-345 also requires induction by hormone. Basal phosphorylation on Ser-81, Ser-162, Ser-190 and Ser-400 is increased in response to progesterone and can be phosphorylated in vitro by the CDK2-A1 complex. Increased levels of phosphorylation on Ser-400 also in the presence of EGF, heregulin, IGF, PMA and FBS. Phosphorylation at this site by CDK2 is ligand-independent, and increases nuclear translocation and transcriptional activity. Phosphorylation at Ser-162 and Ser-294, but not at Ser-190, is impaired during the G(2)/M phase of the cell cycle. Phosphorylation on Ser-345 by ERK1/2 MAPK is required for interaction with SP1. Post-translationally, sumoylation is hormone-dependent and represses transcriptional activity. Sumoylation on all three sites is enhanced by PIAS3. Desumoylated by SENP1. Sumoylation on Lys-388, the main site of sumoylation, is repressed by ubiquitination on the same site, and modulated by phosphorylation at Ser-294. In terms of processing, ubiquitination is hormone-dependent and represses sumoylation on the same site. Promoted by MAPK-mediated phosphorylation on Ser-294. Ubiquitinated by UBR5, leading to its degradation: UBR5 specifically recognizes and binds ligand-bound PGR when it is not associated with coactivators (NCOAs). In presence of NCOAs, the UBR5-degron is not accessible, preventing its ubiquitination and degradation. Palmitoylated by ZDHHC7 and ZDHHC21. Palmitoylation is required for plasma membrane targeting and for rapid intracellular signaling via ERK and AKT kinases and cAMP generation.

The protein resides in the nucleus. It is found in the cytoplasm. Its function is as follows. The steroid hormones and their receptors are involved in the regulation of eukaryotic gene expression and affect cellular proliferation and differentiation in target tissues. Transcriptional activator of several progesteron-dependent promoters in a variety of cell types. Involved in activation of SRC-dependent MAPK signaling on hormone stimulation. In Colobus guereza (Mantled guereza), this protein is Progesterone receptor (PGR).